We begin with the raw amino-acid sequence, 111 residues long: Large ribosomal subunit protein uL22 (111 aa).

Belongs to the universal ribosomal protein uL22 family. Part of the 50S ribosomal subunit.

Functionally, this protein binds specifically to 23S rRNA; its binding is stimulated by other ribosomal proteins, e.g. L4, L17, and L20. It is important during the early stages of 50S assembly. It makes multiple contacts with different domains of the 23S rRNA in the assembled 50S subunit and ribosome. Its function is as follows. The globular domain of the protein is located near the polypeptide exit tunnel on the outside of the subunit, while an extended beta-hairpin is found that lines the wall of the exit tunnel in the center of the 70S ribosome. The protein is Large ribosomal subunit protein uL22 of Polynucleobacter necessarius subsp. necessarius (strain STIR1).